We begin with the raw amino-acid sequence, 84 residues long: Defensin-like protein 172 (84 aa).

Residues 1 to 23 (MAKASSTLVLSIIFLVMFALVEQ) form the signal peptide. Cystine bridges form between cysteine 27–cysteine 74, cysteine 34–cysteine 56, cysteine 40–cysteine 68, and cysteine 44–cysteine 70.

This sequence belongs to the DEFL family.

The protein localises to the secreted. This chain is Defensin-like protein 172 (LCR60), found in Arabidopsis thaliana (Mouse-ear cress).